The following is an 860-amino-acid chain: Spindle and centriole-associated protein 1 (860 aa).

Disordered stretches follow at residues 127 to 150, 172 to 201, 230 to 250, and 294 to 332; these read RKRT…GINQ, DDAG…HSNR, ATQS…AEDQ, and PLLA…TGSS. 3 stretches are compositionally biased toward polar residues: residues 139–150, 190–200, and 230–245; these read PDSSQSHTGINQ, ELPNSLSQHSN, and ATQS…SSEL. A Phosphothreonine modification is found at Thr236. Residue Ser240 is modified to Phosphoserine. Residues 317–329 are compositionally biased toward low complexity; the sequence is SSSTASADRPSST. Residues 383–439 adopt a coiled-coil conformation; the sequence is RYLKESEIQLRKEVETRQQLEQMLGDHRELIDALTAEILSLREENSTMQARLQQYMV. Residues 623 to 645 are disordered; the sequence is PAFVSLSQPPCSSLPSTQQPRNP. The span at 627–642 shows a compositional bias: low complexity; sequence SLSQPPCSSLPSTQQP. Phosphoserine is present on Ser648. Residues 693-718 form a disordered region; that stretch reads ITSSGGEQGDGLREPRKQGSASEVST. The stretch at 729 to 757 forms a coiled coil; it reads SSMEERIAELNRQSMEARSKLLQLIEQQK. Phosphoserine is present on residues Ser765, Ser766, Ser769, and Ser824. Residues 792–860 form a disordered region; sequence GMEASESSKC…GWFALSAHIP (69 aa). Low complexity predominate over residues 804–824; that stretch reads VSPVSGNSSRRSSGAISNSCS.

As to quaternary structure, interacts with CEP120.

The protein localises to the cytoplasm. It localises to the cytoskeleton. The protein resides in the microtubule organizing center. Its subcellular location is the centrosome. It is found in the centriole. The protein localises to the spindle. In terms of biological role, regulator required for centriole duplication, for proper bipolar spindle formation and chromosome congression in mitosis. In Mus musculus (Mouse), this protein is Spindle and centriole-associated protein 1 (Spice1).